The primary structure comprises 279 residues: 3-methyl-2-oxobutanoate hydroxymethyltransferase (279 aa).

Residues aspartate 43 and aspartate 82 each coordinate Mg(2+). 3-methyl-2-oxobutanoate is bound by residues 43–44, aspartate 82, and lysine 112; that span reads DS. Glutamate 114 serves as a coordination point for Mg(2+). The active-site Proton acceptor is glutamate 181.

The protein belongs to the PanB family. Homodecamer; pentamer of dimers. It depends on Mg(2+) as a cofactor.

The protein localises to the cytoplasm. It carries out the reaction 3-methyl-2-oxobutanoate + (6R)-5,10-methylene-5,6,7,8-tetrahydrofolate + H2O = 2-dehydropantoate + (6S)-5,6,7,8-tetrahydrofolate. It participates in cofactor biosynthesis; (R)-pantothenate biosynthesis; (R)-pantoate from 3-methyl-2-oxobutanoate: step 1/2. Functionally, catalyzes the reversible reaction in which hydroxymethyl group from 5,10-methylenetetrahydrofolate is transferred onto alpha-ketoisovalerate to form ketopantoate. The sequence is that of 3-methyl-2-oxobutanoate hydroxymethyltransferase from Exiguobacterium sibiricum (strain DSM 17290 / CCUG 55495 / CIP 109462 / JCM 13490 / 255-15).